The sequence spans 366 residues: tRNA-queuosine alpha-mannosyltransferase (366 aa).

The protein belongs to the glycosyltransferase group 1 family. Glycosyltransferase 4 subfamily.

It localises to the cytoplasm. Its subcellular location is the nucleus. It catalyses the reaction queuosine(34) in tRNA(Asp) + GDP-alpha-D-mannose = O-4''-alpha-D-mannosylqueuosine(34) in tRNA(Asp) + GDP + H(+). Its function is as follows. Glycosyltransferase that specifically catalyzes mannosylation of cytoplasmic tRNA(Asp) modified with queuosine at position 34 (queuosine(34)). Mannosylates the cyclopentene moiety of queuosine(34) in tRNA(Asp) to form mannosyl-queuosine(34). Mannosylation of queuosine(34) in tRNA(Asp) is required to slow-down elongation at cognate codons, GAC and GAU, thereby regulating protein translation. This is tRNA-queuosine alpha-mannosyltransferase (GTDC1) from Bos taurus (Bovine).